The sequence spans 375 residues: DNA replication and repair protein RecF (375 aa).

ATP is bound at residue 30–37 (GENAQGKT).

Belongs to the RecF family.

It is found in the cytoplasm. Its function is as follows. The RecF protein is involved in DNA metabolism; it is required for DNA replication and normal SOS inducibility. RecF binds preferentially to single-stranded, linear DNA. It also seems to bind ATP. The chain is DNA replication and repair protein RecF from Bacillus cereus (strain G9842).